The chain runs to 147 residues: Bis(5'-nucleosyl)-tetraphosphatase [asymmetrical] (147 aa).

At A2 the chain carries N-acetylalanine. A Nudix hydrolase domain is found at 2–139 (ALRACGLIIF…EMKATLQEGH (138 aa)). Positions 43–64 (GHVDPGENDLETALRETREETG) match the Nudix box motif.

It belongs to the Nudix hydrolase family. A divalent metal cation is required as a cofactor.

The catalysed reaction is P(1),P(4)-bis(5'-guanosyl) tetraphosphate + H2O = GMP + GTP + 2 H(+). It carries out the reaction a 5'-end CoA-ribonucleoside in mRNA + H2O = a 5'-end phospho-adenosine-phospho-ribonucleoside in mRNA + (R)-4'-phosphopantetheine + 2 H(+). It catalyses the reaction a 5'-end FAD-phospho-ribonucleoside in mRNA + H2O = a 5'-end phospho-adenosine-phospho-ribonucleoside in mRNA + FMN + 2 H(+). In terms of biological role, catalyzes the asymmetric hydrolysis of diadenosine 5',5'''-P1,P4-tetraphosphate (Ap4A) to yield AMP and ATP. Exhibits decapping activity towards FAD-capped RNAs and dpCoA-capped RNAs in vitro. The chain is Bis(5'-nucleosyl)-tetraphosphatase [asymmetrical] (Nudt2) from Mus musculus (Mouse).